Consider the following 216-residue polypeptide: Small ribosomal subunit protein uS5 (216 aa).

The segment at methionine 1 to proline 55 is disordered. Residues leucine 20–asparagine 31 show a composition bias toward polar residues. Residues phenylalanine 57 to valine 120 enclose the S5 DRBM domain.

The protein belongs to the universal ribosomal protein uS5 family. As to quaternary structure, part of the 30S ribosomal subunit. Contacts proteins S4 and S8.

Functionally, with S4 and S12 plays an important role in translational accuracy. Located at the back of the 30S subunit body where it stabilizes the conformation of the head with respect to the body. This is Small ribosomal subunit protein uS5 from Mesomycoplasma hyopneumoniae (strain J / ATCC 25934 / NCTC 10110) (Mycoplasma hyopneumoniae).